The following is a 476-amino-acid chain: Membrane-bound lytic murein transglycosylase F (476 aa).

Residues 1 to 15 (MRSFLLILFCVSLLT) form the signal peptide. The tract at residues 16 to 258 (GCQGERVDAA…HLNEKYFAHV (243 aa)) is non-LT domain. Positions 259–476 (KRFDYVDTRA…QSEISAAQPN (218 aa)) are LT domain. Glutamate 303 is a catalytic residue. The segment at 456–476 (EAQQQTAEKQSQSEISAAQPN) is disordered.

This sequence in the N-terminal section; belongs to the bacterial solute-binding protein 3 family. In the C-terminal section; belongs to the transglycosylase Slt family.

The protein resides in the cell outer membrane. The enzyme catalyses Exolytic cleavage of the (1-&gt;4)-beta-glycosidic linkage between N-acetylmuramic acid (MurNAc) and N-acetylglucosamine (GlcNAc) residues in peptidoglycan, from either the reducing or the non-reducing ends of the peptidoglycan chains, with concomitant formation of a 1,6-anhydrobond in the MurNAc residue.. Its function is as follows. Murein-degrading enzyme that degrades murein glycan strands and insoluble, high-molecular weight murein sacculi, with the concomitant formation of a 1,6-anhydromuramoyl product. Lytic transglycosylases (LTs) play an integral role in the metabolism of the peptidoglycan (PG) sacculus. Their lytic action creates space within the PG sacculus to allow for its expansion as well as for the insertion of various structures such as secretion systems and flagella. This Shewanella loihica (strain ATCC BAA-1088 / PV-4) protein is Membrane-bound lytic murein transglycosylase F.